Reading from the N-terminus, the 319-residue chain is 3'-5' exoribonuclease YhaM (319 aa).

The segment at residues 12-90 (EAVDGYLLIK…QLKIASIRPT (79 aa)) is a DNA-binding region (OB). In terms of domain architecture, HD spans 163-279 (HVVSMLRIGK…LHLIDNIDAK (117 aa)).

The protein belongs to the YhaM family.

In terms of biological role, shows a 3'-5' exoribonuclease activity. This is 3'-5' exoribonuclease YhaM from Shouchella clausii (strain KSM-K16) (Alkalihalobacillus clausii).